The sequence spans 668 residues: MSQSVSLTFPDGSVRSFPAGATGRDVAESISKSLAKSAVAIAIDGGVRDLSDAVTDGKIEIITRKDPRALELIRHDAAHVMAEAVQELWPGTQVTIGPVIENGFYYDFAKNEPFTPDDLPKIEKKMKEIIARNAPFTKQIWSREKAKEVFAAKGEQYKVELVDAIPEGQDLKIYHQGEWFDLCRGPHMASTGQVGTAFKLMKVAGAYWRGDSNNAMLSRIYGTAWADQADLDNYLHMLAEAEKRDHRKLGREMDLFHFQEEGPGVVFWHGKGWRIFQTLVAYMRRRLAIDYEEVNAPQVLDTSLWETSGHWGWYQENMFGVKSAHAMTHPDDKEADNRVFALKPMNCPGHVQIFKHGLKSYRELPIRLAEFGLVHRYEPSGALHGLMRVRGFTQDDAHIFCTDEQMAAECLKINDLILSVYEDFGFKEIVVKLSTRPEKRVGSDALWDRAEAVMTDVLKTIEAQSEGRIKTGILPGEGAFYGPKFEYTLKDAIGREWQCGTTQVDFNLPERFGAFYIDSNSEKTQPVMIHRAICGSMERFLGILIENFAGHMPLWVSPLQVVVATITSEADAYGLEVAEALREAGLNVETDFRNEKINYKIREHSVTKVPVIIVCGRKEAEDRTVNIRRLGSQDQVSMGLDTAVESLALEATPPDVRRKADAKKAKAA.

Positions 1-64 constitute a TGS domain; sequence MSQSVSLTFP…TDGKIEIITR (64 aa). Residues 245–553 form a catalytic region; sequence DHRKLGREMD…LIENFAGHMP (309 aa). 3 residues coordinate Zn(2+): Cys-347, His-398, and His-530.

It belongs to the class-II aminoacyl-tRNA synthetase family. In terms of assembly, homodimer. It depends on Zn(2+) as a cofactor.

The protein resides in the cytoplasm. The enzyme catalyses tRNA(Thr) + L-threonine + ATP = L-threonyl-tRNA(Thr) + AMP + diphosphate + H(+). Its function is as follows. Catalyzes the attachment of threonine to tRNA(Thr) in a two-step reaction: L-threonine is first activated by ATP to form Thr-AMP and then transferred to the acceptor end of tRNA(Thr). Also edits incorrectly charged L-seryl-tRNA(Thr). This Rhizobium etli (strain ATCC 51251 / DSM 11541 / JCM 21823 / NBRC 15573 / CFN 42) protein is Threonine--tRNA ligase.